Here is a 478-residue protein sequence, read N- to C-terminus: Transcript termination protein A18 (478 aa).

Residues 98–254 enclose the Helicase ATP-binding domain; sequence KLSTHRPMYM…NDVVNVLKVS (157 aa). 111–118 provides a ligand contact to ATP; sequence LSCGFGKT. Positions 204-207 match the DESH box motif; sequence DESH. A Helicase C-terminal domain is found at 302–468; sequence PRNNLIVETV…GIEGTKEEPV (167 aa).

Belongs to the helicase family. Poxviruses subfamily. As to quaternary structure, interacts with G2. Might be part of a transcription complex composed at least of G2, A18, and H5.

The protein localises to the virion. Its function is as follows. DNA helicase which seems to act as a postreplicative transcription termination factor. Involved in ATP-dependent release of nascent RNA. Forms a stable complex with single-stranded DNA, and to a lesser extent RNA. The chain is Transcript termination protein A18 from Rabbit fibroma virus (strain Kasza) (RFV).